The following is a 365-amino-acid chain: Poly(rC)-binding protein 2 (365 aa).

KH domains are found at residues 13–75 (TLTI…FAMI) and 97–162 (PVTL…VKQI). A Glycyl lysine isopeptide (Lys-Gly) (interchain with G-Cter in SUMO2) cross-link involves residue Lys-115. The residue at position 173 (Ser-173) is a Phosphoserine. Lys-185 participates in a covalent cross-link: Glycyl lysine isopeptide (Lys-Gly) (interchain with G-Cter in SUMO2). Phosphoserine is present on residues Ser-189 and Ser-272. In terms of domain architecture, KH 3 spans 287-351 (TTSHELTIPN…ASISLAQYLI (65 aa)). Lys-322 participates in a covalent cross-link: Glycyl lysine isopeptide (Lys-Gly) (interchain with G-Cter in SUMO2). Residues Ser-364 and Ser-365 each carry the phosphoserine modification.

As to quaternary structure, identified in a mRNP complex, at least composed of DHX9, DDX3X, ELAVL1, HNRNPU, IGF2BP1, ILF3, PABPC1, PCBP2, PTBP2, STAU1, STAU2, SYNCRIP and YBX1. Interacts with IFIH1 and RNF135. Interacts with MAVS (via C-terminus) and ITCH (via WW domains). Interacts with CGAS; preventing the formation of liquid-like droplets in which CGAS is activated. Phosphorylated. The non-phosphorylated form(s) exhibited the strongest poly(rC)-binding activity. In terms of processing, (Microbial infection) Proteolytically cleaved by picornavirus proteinase 3CD. Detected in all tissues examined.

Its subcellular location is the nucleus. The protein resides in the cytoplasm. Functionally, single-stranded nucleic acid binding protein that binds preferentially to oligo dC. Major cellular poly(rC)-binding protein. Also binds poly(rU). Acts as a negative regulator of antiviral signaling. Negatively regulates cellular antiviral responses mediated by MAVS signaling. It acts as an adapter between MAVS and the E3 ubiquitin ligase ITCH, therefore triggering MAVS ubiquitination and degradation. Negativeley regulates the cGAS-STING pathway via interaction with CGAS, preventing the formation of liquid-like droplets in which CGAS is activated. Together with PCBP1, required for erythropoiesis, possibly by regulating mRNA splicing. Its function is as follows. (Microbial infection) In case of infection by poliovirus, binds to the viral internal ribosome entry site (IRES) and stimulates the IRES-mediated translation. Also plays a role in initiation of viral RNA replication in concert with the viral protein 3CD. The chain is Poly(rC)-binding protein 2 from Homo sapiens (Human).